Reading from the N-terminus, the 119-residue chain is Small ribosomal subunit protein bS6 (119 aa).

The protein belongs to the bacterial ribosomal protein bS6 family.

Functionally, binds together with bS18 to 16S ribosomal RNA. This Thermosipho africanus (strain TCF52B) protein is Small ribosomal subunit protein bS6.